A 284-amino-acid polypeptide reads, in one-letter code: Diaminopimelate epimerase (284 aa).

Residues Asn13 and Asn70 each coordinate substrate. Cys79 acts as the Proton donor in catalysis. Substrate-binding positions include 80-81 (GN), Asn167, Asn200, and 218-219 (ER). Cys227 acts as the Proton acceptor in catalysis. 228–229 (GT) lines the substrate pocket.

It belongs to the diaminopimelate epimerase family. As to quaternary structure, homodimer.

It is found in the cytoplasm. It catalyses the reaction (2S,6S)-2,6-diaminopimelate = meso-2,6-diaminopimelate. It participates in amino-acid biosynthesis; L-lysine biosynthesis via DAP pathway; DL-2,6-diaminopimelate from LL-2,6-diaminopimelate: step 1/1. In terms of biological role, catalyzes the stereoinversion of LL-2,6-diaminopimelate (L,L-DAP) to meso-diaminopimelate (meso-DAP), a precursor of L-lysine and an essential component of the bacterial peptidoglycan. In Prochlorococcus marinus (strain NATL1A), this protein is Diaminopimelate epimerase.